Consider the following 66-residue polypeptide: Protein translocase subunit SecE (66 aa).

A helical transmembrane segment spans residues 29-49 (LVASTLVVVVAVFIFSPICLV).

Belongs to the SecE/SEC61-gamma family. As to quaternary structure, component of the Sec protein translocase complex. Heterotrimer consisting of SecY, SecE and SecG subunits. The heterotrimers can form oligomers, although 1 heterotrimer is thought to be able to translocate proteins. Interacts with the ribosome. Interacts with SecDF, and other proteins may be involved. Interacts with SecA.

Its subcellular location is the cell inner membrane. In terms of biological role, essential subunit of the Sec protein translocation channel SecYEG. Clamps together the 2 halves of SecY. May contact the channel plug during translocation. In Rickettsia montanensis, this protein is Protein translocase subunit SecE.